Reading from the N-terminus, the 362-residue chain is HLA class I histocompatibility antigen, B alpha chain (362 aa).

Residues 1 to 24 (MLVMAPRTVLLLLSAALALTETWA) form the signal peptide. Residues 3 to 11 (VMAPRTVLL) form a VL9 epitope region. The segment at 25 to 114 (GSHSMRYFYT…LRGYYNQSEA (90 aa)) is alpha-1. Residues 25 to 309 (GSHSMRYFYT…PSSQSTVPIV (285 aa)) lie on the Extracellular side of the membrane. Asn-87 contributes to the a peptide antigen binding site. A Bw6 motif motif is present at residues 101–107 (SLRNLRG). Tyr-108 provides a ligand contact to a peptide antigen. Asn-110 is a glycosylation site (N-linked (GlcNAc...) asparagine). An alpha-2 region spans residues 115 to 206 (GSHTLQSMYG…ENGKDKLERA (92 aa)). Residues Cys-125 and Cys-188 are joined by a disulfide bond. The a peptide antigen site is built by Thr-167, Lys-170, Glu-176, Tyr-183, and Tyr-195. The interval 207–298 (DPPKTHVTHH…GLPKPLTLRW (92 aa)) is alpha-3. The Ig-like C1-type domain maps to 209–295 (PKTHVTHHPI…QHEGLPKPLT (87 aa)). A disulfide bridge links Cys-227 with Cys-283. The connecting peptide stretch occupies residues 299 to 309 (EPSSQSTVPIV). Residues 310 to 333 (GIVAGLAVLAVVVIGAVVAAVMCR) form a helical membrane-spanning segment. Residues 334–362 (RKSSGGKGGSYSQAACSDSAQGSDVSLTA) are Cytoplasmic-facing. The tract at residues 337 to 362 (SGGKGGSYSQAACSDSAQGSDVSLTA) is disordered. The span at 346–362 (QAACSDSAQGSDVSLTA) shows a compositional bias: polar residues.

Heterotrimer that consists of an alpha chain HLA-B, a beta chain B2M and a peptide (peptide-HLA-B-B2M). Early in biogenesis, HLA-B-B2M dimer interacts with the components of the peptide-loading complex composed of TAPBP, TAP1-TAP2, TAPBPL, PDIA3/ERP57 and CALR. Interacts with TAP1-TAP2 transporter via TAPBP; this interaction is obligatory for the loading of peptide epitopes delivered to the ER by TAP1-TAP2 transporter. Interacts with TAPBPL; TAPBPL binds peptide-free HLA-B-B2M complexes or those loaded with low affinity peptides, likely facilitating peptide exchange for higher affinity peptides. Only optimally assembled peptide-HLA-B-B2M trimer translocates to the surface of antigen-presenting cells, where it interacts with TCR and CD8 coreceptor on the surface of T cells. HLA-B (via polymorphic alpha-1 and alpha-2 domains) interacts with antigen-specific TCR (via CDR1, CDR2 and CDR3 domains). One HLA-B molecule (mainly via nonpolymorphic alpha-3 domain) interacts with one CD8A homodimer (via CDR-like loop); this interaction ensures peptide-HLA-B-B2M recognition by CD8-positive T cells only. Allele B*57:01 interacts (via Bw4 motif) with KIR3DL1 (via Ig-like C2-type domain); this interaction may interfere with peptide binding. Allele B*46:01 interacts with KIR2DL3. As to quaternary structure, (Microbial infection) Interacts with HTLV-1 accessory protein p12I.

The protein localises to the cell membrane. The protein resides in the endoplasmic reticulum membrane. In terms of biological role, antigen-presenting major histocompatibility complex class I (MHCI) molecule. In complex with B2M/beta 2 microglobulin displays primarily viral and tumor-derived peptides on antigen-presenting cells for recognition by alpha-beta T cell receptor (TCR) on HLA-B-restricted CD8-positive T cells, guiding antigen-specific T cell immune response to eliminate infected or transformed cells. May also present self-peptides derived from the signal sequence of secreted or membrane proteins, although T cells specific for these peptides are usually inactivated to prevent autoreactivity. Both the peptide and the MHC molecule are recognized by TCR, the peptide is responsible for the fine specificity of antigen recognition and MHC residues account for the MHC restriction of T cells. Typically presents intracellular peptide antigens of 8 to 13 amino acids that arise from cytosolic proteolysis via constitutive proteasome and IFNG-induced immunoproteasome. Can bind different peptides containing allele-specific binding motifs, which are mainly defined by anchor residues at position 2 and 9. Functionally, allele B*07:02: Displays peptides sharing a common signature motif, namely a Pro residue at position 2 and mainly a Leu anchor residue at the C-terminus. Presents a long peptide (APRGPHGGAASGL) derived from the cancer-testis antigen CTAG1A/NY-ESO-1, eliciting a polyclonal CD8-positive T cell response against tumor cells. Presents viral epitopes derived from HIV-1 gag-pol (TPQDLNTML) and Nef (RPQVPLRPM). Presents an immunodominant epitope derived from SARS-CoV-2 N/nucleoprotein (SPRWYFYYL). Displays self-peptides including a peptide derived from the signal sequence of HLA-DPB1 (APRTVALTA). Allele B*08:01: Presents to CD8-positive T cells viral epitopes derived from EBV/HHV-4 EBNA3 (QAKWRLQTL), eliciting cytotoxic T cell response. Its function is as follows. Allele B*13:02: Presents multiple HIV-1 epitopes derived from gag (RQANFLGKI, GQMREPRGSDI), nef (RQDILDLWI), gag-pol (RQYDQILIE, GQGQWTYQI) and rev (LQLPPLERL), all having in common a Gln residue at position 2 and mainly hydrophobic amino acids Leu, Ile or Val at the C-terminus. Associated with successful control of HIV-1 infection. In terms of biological role, allele B*18:01: Preferentially presents octomeric and nonameric peptides sharing a common motif, namely a Glu at position 2 and Phe or Tyr anchor residues at the C-terminus. Presents an EBV/HHV-4 epitope derived from BZLF1 (SELEIKRY). May present to CD8-positive T cells an antigenic peptide derived from MAGEA3 (MEVDPIGHLY), triggering an anti-tumor immune response. May display a broad repertoire of self-peptides with a preference for peptides derived from RNA-binding proteins. Functionally, allele B*27:05: Presents to CD8-positive T cells immunodominant viral epitopes derived from HCV POLG (ARMILMTHF), HIV-1 gag (KRWIILGLNK), IAV NP (SRYWAIRTR), SARS-CoV-2 N/nucleoprotein (QRNAPRITF), EBV/HHV-4 EBNA4 (HRCQAIRKK) and EBV/HHV-4 EBNA6 (RRIYDLIEL), conferring longterm protection against viral infection. Can present self-peptides derived from cytosolic and nuclear proteins. All peptides carry an Arg at position 2. The peptide-bound form interacts with NK cell inhibitory receptor KIR3DL1 and inhibits NK cell activation in a peptide-specific way, being particularly sensitive to the nature of the amino acid side chain at position 8 of the antigenic peptide. KIR3DL1 fails to recognize HLA-B*27:05 in complex with B2M and EBV/HHV-4 EBNA6 (RRIYDLIEL) peptide, which can lead to increased activation of NK cells during infection. May present an altered repertoire of peptides in the absence of TAP1-TAP2 and TAPBPL. Allele B*40:01: Presents immunodominant viral epitopes derived from EBV/HHV-4 LMP2 (IEDPPFNSL) and SARS-CoV-2 N/nucleoprotein (MEVTPSGTWL), triggering memory CD8-positive T cell response. Displays self-peptides sharing a signature motif, namely a Glu at position 2 and a Leu anchor residue at the C-terminus. Its function is as follows. Allele B*41:01: Displays self-peptides sharing a signature motif, namely a Glu at position 2 and Ala or Pro anchor residues at the C-terminus. In terms of biological role, allele B*44:02: Presents immunodominant viral epitopes derived from EBV/HHV-4 EBNA4 (VEITPYKPTW) and EBNA6 (AEGGVGWRHW, EENLLDFVRF), triggering memory CD8-positive T cell response. Displays self-peptides sharing a signature motif, namely a Glu at position 2 and Phe, Tyr or Trp anchor residues at the C-terminus. Functionally, allele B*45:01: Displays self-peptides sharing a signature motif, namely a Glu at position 2 and Ala or Pro anchor residues at the C-terminus. Allele B*46:01: Preferentially presents nonameric peptides sharing a signature motif, namely Ala and Leu at position 2 and Tyr, Phe, Leu, or Met anchor residues at the C-terminus. The peptide-bound form interacts with KIR2DL3 and inhibits NK cell cytotoxic response in a peptide-specific way. Its function is as follows. Allele B*47:01: Displays self-peptides sharing a signature motif, namely an Asp at position 2 and Leu or Met anchor residues at the C-terminus. In terms of biological role, allele B*49:01: Displays self-peptides sharing a signature motif, namely a Glu at position 2 and Ile or Val anchor residues at the C-terminus. Functionally, allele B*50:01: Displays self-peptides sharing a signature motif, namely a Glu at position 2 and Ala or Pro anchor residues at the C-terminus. Allele B*51:01: Presents an octomeric HIV-1 epitope derived from gag-pol (TAFTIPSI) to the public TRAV17/TRBV7-3 TCR clonotype, strongly suppressing HIV-1 replication. Its function is as follows. Allele B*54:01: Displays peptides sharing a common signature motif, namely a Pro residue at position 2 and Ala anchor residue at the C-terminus. In terms of biological role, allele B*55:01: Displays peptides sharing a common signature motif, namely a Pro residue at position 2 and Ala anchor residue at the C-terminus. Functionally, allele B*56:01: Displays peptides sharing a common signature motif, namely a Pro residue at position 2 and Ala anchor residue at the C-terminus. Allele B*57:01: The peptide-bound form recognizes KIR3DL1 and inhibits NK cell cytotoxic response. Presents HIV gag peptides (immunodominant KAFSPEVIPMF and subdominant KALGPAATL epitopes) predominantly to CD8-positive T cell clones expressing a TRAV41-containing TCR, triggering HLA-B-restricted T cell responses. Its function is as follows. Allele B*67:01: Displays peptides sharing a common signature motif, namely a Pro residue at position 2 and Leu anchor residue at the C-terminus. In Homo sapiens (Human), this protein is HLA class I histocompatibility antigen, B alpha chain.